Consider the following 459-residue polypeptide: Chromosomal replication initiator protein DnaA (459 aa).

The tract at residues 1–74 (MQKIETFWHF…DEMAQDHFNE (74 aa)) is domain I, interacts with DnaA modulators. The segment at 74 to 122 (ERISFRLELREPAESEAQTVRTSAQKNREDKKPAAEKTQGVTSRKTNPS) is domain II. Residues 87 to 122 (ESEAQTVRTSAQKNREDKKPAAEKTQGVTSRKTNPS) are disordered. Over residues 89–98 (EAQTVRTSAQ) the composition is skewed to polar residues. The segment covering 99-108 (KNREDKKPAA) has biased composition (basic and acidic residues). Positions 112-122 (QGVTSRKTNPS) are enriched in polar residues. A domain III, AAA+ region region spans residues 123-339 (QLNASFTFDA…GALKRVLAFS (217 aa)). Positions 167, 169, 170, and 171 each coordinate ATP. The tract at residues 340–459 (RFTGHSISLD…FNALMHILRG (120 aa)) is domain IV, binds dsDNA.

It belongs to the DnaA family. In terms of assembly, oligomerizes as a right-handed, spiral filament on DNA at oriC.

It is found in the cytoplasm. Functionally, plays an essential role in the initiation and regulation of chromosomal replication. ATP-DnaA binds to the origin of replication (oriC) to initiate formation of the DNA replication initiation complex once per cell cycle. Binds the DnaA box (a 9 base pair repeat at the origin) and separates the double-stranded (ds)DNA. Forms a right-handed helical filament on oriC DNA; dsDNA binds to the exterior of the filament while single-stranded (ss)DNA is stabiized in the filament's interior. The ATP-DnaA-oriC complex binds and stabilizes one strand of the AT-rich DNA unwinding element (DUE), permitting loading of DNA polymerase. After initiation quickly degrades to an ADP-DnaA complex that is not apt for DNA replication. Binds acidic phospholipids. This chain is Chromosomal replication initiator protein DnaA, found in Nitrosomonas europaea (strain ATCC 19718 / CIP 103999 / KCTC 2705 / NBRC 14298).